A 691-amino-acid polypeptide reads, in one-letter code: Replication and transcription activator (691 aa).

O-linked (GlcNAc) threonine; by host glycans are attached at residues T366 and T367. Disordered stretches follow at residues 482–582 (EASG…SLPP) and 626–677 (LDTP…QESG). Residues 504 to 513 (TAAATAAEAT) show a composition bias toward low complexity. The span at 515–531 (PKRKQRSKERSSKKRKA) shows a compositional bias: basic residues. Residues 539–556 (TTPSTTTPGTSLGSITTP) show a composition bias toward low complexity. A compositionally biased stretch (polar residues) spans 655-677 (EYTQLQPVRATSATPANEVQESG).

The protein belongs to the herpesviridae TAF50 family. As to quaternary structure, homotetramer. Interacts with KTA/ORF57. Interacts with host PARP1; this interaction negatively regulates RTA/ORF50 transactivation activity. Interacts with host SMC5 and SMC6; these interactions remove the repressive chromatin structure to allow viral reactivation. Interacts with host POU2F1; this interaction enhances RTA/ORF50-mediated transactivation of several viral promoters including K-bZIP promoter.

It is found in the host nucleus. It carries out the reaction S-ubiquitinyl-[E2 ubiquitin-conjugating enzyme]-L-cysteine + [acceptor protein]-L-lysine = [E2 ubiquitin-conjugating enzyme]-L-cysteine + N(6)-ubiquitinyl-[acceptor protein]-L-lysine.. Transcriptional transactivator that is necessary and sufficient for reactivation of the virus from latency. Acts post-transcriptionally and transcriptionally to regulate viral lytic gene expression and synergistically with ORF57 activates certain early and late viral promoters including its own promoter. Autostimulation on its promoter is mediated by the formation of a ternary complex between ORF50 and the cellular components HGMB1 and POU2F1. Also possesses a bimodal activity in targeting proteins for degradation through using its own E3 ligase activity or by stabilizing and chaperoning host E3 ligases. These activities help to subvert the host innate and adaptive immune responses while also modulating the host transcriptome and protein landscape to promote virus production. For instance, targets the host SMC5/6 complex for ubiquitination and subsequent degradation through the ubiquitin-proteasome during reactivation while during latency, host SMC5/6 complex binds to the viral episome and condenses viral chromatin, creating a repressive chromatin structure to silence genome transcription. Hijacks the cellular E3 ligase complex RNF20/40 to increase the level of transcriptionally active RNA polymerase II on viral gene promoters thereby facilitating lytic gene expression. Acts as a SUMO-targeting ubiquitin ligase and affects general sumoylation of cellular proteins. Promotes the polyubiquitination and subsequent degradation of host MYD88 and thereby inhibits MYD88-mediated TLR4 signaling. Induces the degradation of vFLIP/ORF71 together with cellular ubiquitin ligase ITCH to prevent vFLIP-induced NF-kappa-B signaling. This is Replication and transcription activator (ORF50) from Homo sapiens (Human).